A 388-amino-acid chain; its full sequence is MRYFTAGESHGPRLTAIIEGVPAGLPLTADYINAELRRRQGGYGRGGRMKIESDQVEITSGVRHGLTMGSPITLNVTNRDFKNWTEIMSAADIEDKKKSIRKLTKPRPGHADLVGGMKYRFSDLRNSLERSSARETTMRVAVGSVAKRLLEELEITIASHVVVLGGIEVDVPENLTVAEIKERASQSEISVVNQEHEQEIKDYIDQIKKEGNTIGGIIETVVGGVPVGLGSYVQWDRKLDAQIAQGVVSINAFKGVEFGLGFKDGYLKGSYVMDEITWSKEDGYRRKSNNLGGFEGGMTNGQPIVVRGVMKPIPTLYKPLMSVDIETHEPYKASVERSDPTAVPAAAVVMEGVVATVLATEILNKFSSDNMEELKEAVKSHQKFIKEF.

Residues arginine 39 and arginine 45 each coordinate NADP(+). FMN is bound by residues arginine 130–serine 132, asparagine 251–alanine 252, glycine 296, lysine 311–threonine 315, and arginine 337.

This sequence belongs to the chorismate synthase family. As to quaternary structure, homotetramer. The cofactor is FMNH2.

The catalysed reaction is 5-O-(1-carboxyvinyl)-3-phosphoshikimate = chorismate + phosphate. The protein operates within metabolic intermediate biosynthesis; chorismate biosynthesis; chorismate from D-erythrose 4-phosphate and phosphoenolpyruvate: step 7/7. Its function is as follows. Catalyzes the anti-1,4-elimination of the C-3 phosphate and the C-6 proR hydrogen from 5-enolpyruvylshikimate-3-phosphate (EPSP) to yield chorismate, which is the branch point compound that serves as the starting substrate for the three terminal pathways of aromatic amino acid biosynthesis. This reaction introduces a second double bond into the aromatic ring system. The sequence is that of Chorismate synthase from Streptococcus mutans serotype c (strain ATCC 700610 / UA159).